Here is a 448-residue protein sequence, read N- to C-terminus: Fibulin-5 (448 aa).

The signal sequence occupies residues 1–23 (MPGLKRILTVTILALWLPHPGNA). The 41-residue stretch at 42–82 (DIDECRTIPEACRGDMMCVNQNGGYLCIPRTNPVYRGPYSN) folds into the EGF-like 1; calcium-binding domain. 17 disulfides stabilise this stretch: C46–C59, C53–C68, C131–C144, C138–C153, C155–C166, C172–C181, C177–C190, C192–C205, C211–C221, C217–C230, C232–C245, C251–C262, C258–C271, C273–C286, C292–C305, C299–C314, and C320–C332. Positions 54 to 56 (RGD) match the Cell attachment site motif. Positions 127 to 167 (DVDECATDSHQCNPTQICINTEGGYTCSCTDGYWLLEGQCL) constitute an EGF-like 2; calcium-binding domain. The region spanning 168-206 (DIDECRYGYCQQLCANVPGSYSCTCNPGFTLNDDGRSCQ) is the EGF-like 3; calcium-binding domain. The 40-residue stretch at 207–246 (DVNECETENPCVQTCVNTYGSFICRCDPGYELEEDGIHCS) folds into the EGF-like 4; calcium-binding domain. The interaction with LOXL1 stretch occupies residues 245 to 448 (CSDMDECSFS…LRIYVSQYPF (204 aa)). The 41-residue stretch at 247-287 (DMDECSFSEFLCQHECVNQPGSYFCSCPPGYVLLDDNRSCQ) folds into the EGF-like 5; calcium-binding domain. Residues N283 and N296 are each glycosylated (N-linked (GlcNAc...) asparagine). Residues 288–333 (DINECEHRNHTCTSLQTCYNLQGGFKCIDPISCEEPYLLIGENRCM) enclose the EGF-like 6; calcium-binding domain.

Belongs to the fibulin family. As to quaternary structure, homodimer. Monomer, homodimerizes in presence of Ca(2+). Interacts with ELN. Interacts (via N-terminus) with the integrins ITGAV/ITGB3, ITGAV/ITGB5 and ITGA9/ITGB1. Interacts with FBN1 (via N-terminal domain). Forms a ternary complex with ELN and FBN1. Interacts with EFEMP2 with moderate affinity. Interacts with LOXL1. Post-translationally, N-glycosylated.

The protein localises to the secreted. It localises to the extracellular space. The protein resides in the extracellular matrix. Functionally, essential for elastic fiber formation, is involved in the assembly of continuous elastin (ELN) polymer and promotes the interaction of microfibrils and ELN. Stabilizes and organizes elastic fibers in the skin, lung and vasculature. Promotes adhesion of endothelial cells through interaction of integrins and the RGD motif. Vascular ligand for integrin receptors which may play a role in vascular development and remodeling. May act as an adapter that mediates the interaction between FBN1 and ELN. The sequence is that of Fibulin-5 (Fbln5) from Mus musculus (Mouse).